Here is a 278-residue protein sequence, read N- to C-terminus: Large ribosomal subunit protein uL2 (278 aa).

2 disordered regions span residues 26–57 and 225–278; these read RSTP…QGGG and VMNP…NKKR. Residues 258 to 278 show a composition bias toward basic residues; sequence RSPKKASNKYIVRRRKTNKKR.

The protein belongs to the universal ribosomal protein uL2 family. In terms of assembly, part of the 50S ribosomal subunit. Forms a bridge to the 30S subunit in the 70S ribosome.

In terms of biological role, one of the primary rRNA binding proteins. Required for association of the 30S and 50S subunits to form the 70S ribosome, for tRNA binding and peptide bond formation. It has been suggested to have peptidyltransferase activity; this is somewhat controversial. Makes several contacts with the 16S rRNA in the 70S ribosome. The chain is Large ribosomal subunit protein uL2 from Streptomyces coelicolor (strain ATCC BAA-471 / A3(2) / M145).